The following is a 144-amino-acid chain: Putative acetyltransferase SAOUHSC_00995 (144 aa).

One can recognise an N-acetyltransferase domain in the interval 1-141 (MFSKVNNQKM…EHIEMTKKLT (141 aa)). CoA is bound by residues 71 to 73 (VAV), Gly79, and 112 to 114 (PFY).

Belongs to the UPF0039 (ElaA) family.

Its function is as follows. Could catalyze the transfer of an acetyl group from acetyl coenzyme A (AcCoA) to an acceptor substrate and release both CoA and the acetylated product. This is Putative acetyltransferase SAOUHSC_00995 from Staphylococcus aureus (strain NCTC 8325 / PS 47).